The primary structure comprises 369 residues: Flagellar P-ring protein (369 aa).

The N-terminal stretch at 1 to 24 (MKTLHRCIGVALLALGALAGTAHA) is a signal peptide.

Belongs to the FlgI family. As to quaternary structure, the basal body constitutes a major portion of the flagellar organelle and consists of four rings (L,P,S, and M) mounted on a central rod.

It localises to the periplasm. It is found in the bacterial flagellum basal body. Assembles around the rod to form the L-ring and probably protects the motor/basal body from shearing forces during rotation. This Ralstonia nicotianae (strain ATCC BAA-1114 / GMI1000) (Ralstonia solanacearum) protein is Flagellar P-ring protein.